We begin with the raw amino-acid sequence, 93 residues long: Small ribosomal subunit protein uS19 (93 aa).

The protein belongs to the universal ribosomal protein uS19 family.

Functionally, protein S19 forms a complex with S13 that binds strongly to the 16S ribosomal RNA. The polypeptide is Small ribosomal subunit protein uS19 (Tropheryma whipplei (strain TW08/27) (Whipple's bacillus)).